The sequence spans 853 residues: EF-hand domain-containing family member B (853 aa).

Disordered regions lie at residues 1–31 and 244–266; these read MCSF…TRAP and AQQP…PGNI. 2 EF-hand domains span residues 581-616 and 617-652; these read QNFD…ANLH and LDKM…KDRI. Positions 594, 598, 605, 630, 632, 634, and 641 each coordinate Ca(2+).

In terms of assembly, microtubule inner protein component of sperm flagellar doublet microtubules. Interacts with STIM1 and ORAI1; the interactions take place upon Ca(2+)-store depletion and dissociate through a Ca(2+)-dependent mechanism. Interaction with STIM1 inhibits STIM1 interaction with SARAF.

The protein localises to the cytoplasm. It is found in the cytoskeleton. It localises to the cilium axoneme. The protein resides in the flagellum axoneme. Its function is as follows. Microtubule inner protein (MIP) part of the dynein-decorated doublet microtubules (DMTs) in cilia axoneme, which is required for motile cilia beating. Cytosolic sensor for calcium, modulates the interaction of STIM1 and ORAI1 upon store depletion and the activation of store-operated Ca(2+) entry (SOCE) and NFAT translocation from cytosol to nucleus. The protein is EF-hand domain-containing family member B of Mus musculus (Mouse).